The sequence spans 110 residues: Large ribosomal subunit protein uL22 (110 aa).

It belongs to the universal ribosomal protein uL22 family. In terms of assembly, part of the 50S ribosomal subunit.

In terms of biological role, this protein binds specifically to 23S rRNA; its binding is stimulated by other ribosomal proteins, e.g. L4, L17, and L20. It is important during the early stages of 50S assembly. It makes multiple contacts with different domains of the 23S rRNA in the assembled 50S subunit and ribosome. Its function is as follows. The globular domain of the protein is located near the polypeptide exit tunnel on the outside of the subunit, while an extended beta-hairpin is found that lines the wall of the exit tunnel in the center of the 70S ribosome. This Saccharophagus degradans (strain 2-40 / ATCC 43961 / DSM 17024) protein is Large ribosomal subunit protein uL22.